Consider the following 111-residue polypeptide: Probable U2 small nuclear ribonucleoprotein B'' (111 aa).

Positions 4–83 constitute an RRM domain; that stretch reads NTLYVNNLND…KEMKIQYAHS (80 aa).

As to quaternary structure, belongs to the 40S cdc5-associated complex (or cwf complex), a spliceosome sub-complex reminiscent of a late-stage spliceosome composed of the U2, U5 and U6 snRNAs and at least brr2, cdc5, cwf2/prp3, cwf3/syf1, cwf4/syf3, cwf5/ecm2, spp42/cwf6, cwf7/spf27, cwf8, cwf9, cwf10, cwf11, cwf12, prp45/cwf13, cwf14, cwf15, cwf16, cwf17, cwf18, cwf19, cwf20, cwf21, cwf22, cwf23, cwf24, cwf25, cwf26, cyp7/cwf27, cwf28, cwf29/ist3, lea1, msl1, prp5/cwf1, prp10, prp12/sap130, prp17, prp22, sap61, sap62, sap114, sap145, slu7, smb1, smd1, smd3, smf1, smg1 and syf2.

Its subcellular location is the nucleus. Involved in pre-mRNA splicing. This protein is associated with snRNP U2. It binds stem loop IV of U2 snRNA. This Schizosaccharomyces pombe (strain 972 / ATCC 24843) (Fission yeast) protein is Probable U2 small nuclear ribonucleoprotein B'' (msl1).